The primary structure comprises 599 residues: RING finger protein unkempt (599 aa).

5 C3H1-type zinc fingers span residues 71 to 100, 111 to 141, 194 to 220, 230 to 264, and 272 to 300; these read YSAD…HRTA, YYKT…HGMQ, NYKT…HNSK, KYRS…HTRT, and IYKS…HVEP. Serine 411 is modified (phosphoserine). The RING-type zinc-finger motif lies at 556 to 591; it reads CMKCEENNRTVTLEPCNHLSICNTCAESVTECPYCQ.

It belongs to the unkempt family. As to expression, ubiquitous in most somatic tissues from syncytial embryo through to embryo stage 15. Expression becomes restricted predominantly to the CNS at stages 16 and 17.

It localises to the cytoplasm. In terms of biological role, essential for late larval/early pupal development. This is RING finger protein unkempt (unk) from Drosophila melanogaster (Fruit fly).